We begin with the raw amino-acid sequence, 23 residues long: Coenzyme PQQ synthesis protein A (23 aa).

Residues Glu-15 to Tyr-19 constitute a cross-link (pyrroloquinoline quinone (Glu-Tyr)).

It belongs to the PqqA family.

Its pathway is cofactor biosynthesis; pyrroloquinoline quinone biosynthesis. Functionally, required for coenzyme pyrroloquinoline quinone (PQQ) biosynthesis. PQQ is probably formed by cross-linking a specific glutamate to a specific tyrosine residue and excising these residues from the peptide. The sequence is that of Coenzyme PQQ synthesis protein A from Colwellia psychrerythraea (strain 34H / ATCC BAA-681) (Vibrio psychroerythus).